Consider the following 212-residue polypeptide: V-type ATP synthase subunit E (212 aa).

Belongs to the V-ATPase E subunit family.

Its function is as follows. Produces ATP from ADP in the presence of a proton gradient across the membrane. The polypeptide is V-type ATP synthase subunit E (Nitrosococcus oceani (strain ATCC 19707 / BCRC 17464 / JCM 30415 / NCIMB 11848 / C-107)).